The chain runs to 470 residues: Protein nucleotidyltransferase YdiU (470 aa).

ATP contacts are provided by Gly-86, Gly-88, Arg-89, Lys-109, Asp-121, Gly-122, Arg-172, and Arg-179. The active-site Proton acceptor is the Asp-244. 2 residues coordinate Mg(2+): Asn-245 and Asp-254. Asp-254 contacts ATP.

This sequence belongs to the SELO family. Requires Mg(2+) as cofactor. Mn(2+) is required as a cofactor.

It carries out the reaction L-seryl-[protein] + ATP = 3-O-(5'-adenylyl)-L-seryl-[protein] + diphosphate. It catalyses the reaction L-threonyl-[protein] + ATP = 3-O-(5'-adenylyl)-L-threonyl-[protein] + diphosphate. The enzyme catalyses L-tyrosyl-[protein] + ATP = O-(5'-adenylyl)-L-tyrosyl-[protein] + diphosphate. The catalysed reaction is L-histidyl-[protein] + UTP = N(tele)-(5'-uridylyl)-L-histidyl-[protein] + diphosphate. It carries out the reaction L-seryl-[protein] + UTP = O-(5'-uridylyl)-L-seryl-[protein] + diphosphate. It catalyses the reaction L-tyrosyl-[protein] + UTP = O-(5'-uridylyl)-L-tyrosyl-[protein] + diphosphate. Its function is as follows. Nucleotidyltransferase involved in the post-translational modification of proteins. It can catalyze the addition of adenosine monophosphate (AMP) or uridine monophosphate (UMP) to a protein, resulting in modifications known as AMPylation and UMPylation. The chain is Protein nucleotidyltransferase YdiU from Roseobacter denitrificans (strain ATCC 33942 / OCh 114) (Erythrobacter sp. (strain OCh 114)).